We begin with the raw amino-acid sequence, 283 residues long: Pantothenate synthetase (283 aa).

34-41 (MGALHEGH) serves as a coordination point for ATP. The Proton donor role is filled by histidine 41. Glutamine 65 is a binding site for (R)-pantoate. A beta-alanine-binding site is contributed by glutamine 65. ATP is bound at residue 152-155 (GQKD). Glutamine 158 contacts (R)-pantoate. Residues valine 181 and 189 to 192 (MSSR) contribute to the ATP site.

Belongs to the pantothenate synthetase family. Homodimer.

It is found in the cytoplasm. It carries out the reaction (R)-pantoate + beta-alanine + ATP = (R)-pantothenate + AMP + diphosphate + H(+). The protein operates within cofactor biosynthesis; (R)-pantothenate biosynthesis; (R)-pantothenate from (R)-pantoate and beta-alanine: step 1/1. In terms of biological role, catalyzes the condensation of pantoate with beta-alanine in an ATP-dependent reaction via a pantoyl-adenylate intermediate. This Nitrobacter winogradskyi (strain ATCC 25391 / DSM 10237 / CIP 104748 / NCIMB 11846 / Nb-255) protein is Pantothenate synthetase.